The chain runs to 495 residues: Tripartite motif-containing protein 5 (495 aa).

A2 is modified (N-acetylalanine). The RING-type zinc finger occupies 15–60; sequence CPICLELLTEPLSLPCGHSFCQACITANHKKSMLYKEEERSCPVCR. Position 87 is a phosphoserine (S87). Residues 92-133 form a B box-type zinc finger; sequence QKVDHCARHGEKLLLFCQEDRKVICWLCERSQEHRGHHTFLM. 4 residues coordinate Zn(2+): C97, H100, C119, and H125. The stretch at 137–177 forms a coiled coil; sequence AQEYHVKLQTALEMLRQKQQEAEKLEADIREEKASWKIQID. The interval 187 to 200 is required for interaction with GABARAP and for autophagy; it reads FEQLREILDWEESN. The region spanning 283–495 is the B30.2/SPRY domain; it reads LKGMLDMFRE…VPMTLCSPSS (213 aa).

It belongs to the TRIM/RBCC family. Can form homodimers and homotrimers. In addition to lower-order dimerization, also exhibits a higher-order multimerization and both low- and high-order multimerizations are essential for its restriction activity. Interacts with BTBD1 and BTBD2. Interacts with PSMC4, PSMC5, PSMD7 and HSPA8/HSC70. Interacts (via B30.2/SPRY domain) with HSPA1A/B. Interacts with PSMC2, MAP3K7/TAK1, TAB2 and TAB3. Interacts with SQSTM1. Interacts with TRIM6 and TRIM34. Interacts with ULK1 (phosphorylated form), GABARAP, GABARAPL1, GABARAPL2, MAP1LC3A, MAP1LC3C and BECN1. In terms of processing, degraded in a proteasome-independent fashion in the absence of viral infection but in a proteasome-dependent fashion following exposure to restriction sensitive virus. Autoubiquitinated in a RING finger- and UBE2D2-dependent manner. Monoubiquitinated by TRIM21. Deubiquitinated by Yersinia YopJ. Ubiquitination may not lead to proteasomal degradation.

The protein resides in the cytoplasm. The protein localises to the nucleus. The catalysed reaction is S-ubiquitinyl-[E2 ubiquitin-conjugating enzyme]-L-cysteine + [acceptor protein]-L-lysine = [E2 ubiquitin-conjugating enzyme]-L-cysteine + N(6)-ubiquitinyl-[acceptor protein]-L-lysine.. It functions in the pathway protein modification; protein ubiquitination. Capsid-specific restriction factor that prevents infection from non-host-adapted retroviruses. Blocks viral replication early in the life cycle, after viral entry but before reverse transcription. In addition to acting as a capsid-specific restriction factor, also acts as a pattern recognition receptor that activates innate immune signaling in response to the retroviral capsid lattice. Binding to the viral capsid triggers its E3 ubiquitin ligase activity, and in concert with the heterodimeric ubiquitin conjugating enzyme complex UBE2V1-UBE2N (also known as UBC13-UEV1A complex) generates 'Lys-63'-linked polyubiquitin chains, which in turn are catalysts in the autophosphorylation of the MAP3K7/TAK1 complex (includes TAK1, TAB2, and TAB3). Activation of the MAP3K7/TAK1 complex by autophosphorylation results in the induction and expression of NF-kappa-B and MAPK-responsive inflammatory genes, thereby leading to an innate immune response in the infected cell. Plays a role in regulating autophagy through activation of autophagy regulator BECN1 by causing its dissociation from its inhibitors BCL2 and TAB2. The sequence is that of Tripartite motif-containing protein 5 (TRIM5) from Erythrocebus patas (Red guenon).